Consider the following 173-residue polypeptide: C-phycocyanin beta subunit (173 aa).

N4-methylasparagine is present on Asn73. (2R,3E)-phycocyanobilin-binding residues include Cys83 and Cys154.

This sequence belongs to the phycobiliprotein family. As to quaternary structure, heterodimer of an alpha and a beta subunit. Part of 2 PBS rod complexes, the conventional PBS rod and a photosystem I-specific CpcL-PBS rod. In terms of processing, contains two covalently linked bilin chromophores.

Its subcellular location is the cellular thylakoid membrane. Functionally, light-harvesting photosynthetic bile pigment-protein from the phycobiliprotein complex (phycobilisome, PBS). Phycocyanin is the major phycobiliprotein in the PBS rod. This is C-phycocyanin beta subunit (cpcB) from Nostoc sp. (strain PCC 7120 / SAG 25.82 / UTEX 2576).